Here is a 220-residue protein sequence, read N- to C-terminus: MEAERRHRALYKGTTPPWKETYRKRCVERLKSNRSKLLDKFRQVGERIHGGVGGSFLVQEVMEEEWKVMQFENGGFPSMWKKDAFSQDPDELATLEEIKQELLLEEKAMVEEFENILQFEEQCFDSVVELSTGDQIVCPVCNRNYLTVTSCFIVCQCGVYINTQSQGMSIEKLHSLLESNLTAHAYHCNKLPVFSVATELGGAASLFMSCQECDAMVVIL.

The segment at 1–45 (MEAERRHRALYKGTTPPWKETYRKRCVERLKSNRSKLLDKFRQVG) is interaction with importin beta. Residues 49 to 165 (HGGVGGSFLV…QCGVYINTQS (117 aa)) are interaction with RPA1. An RIP-type zinc finger spans residues 138-213 (CPVCNRNYLT…ASLFMSCQEC (76 aa)).

As to quaternary structure, interacts directly with the RPA1 subunit of RPA complex. Interacts with importin beta, but not with importin alpha. Forms a complex with the RPA complex and importin beta, which is dissociated by Ran-GTP.

It is found in the nucleus. Mediates the import of RPA complex into the nucleus, via its interaction with importin beta. This Xenopus laevis (African clawed frog) protein is RPA-interacting protein B (rpain-b).